Here is a 521-residue protein sequence, read N- to C-terminus: Potassium/proton antiporter CemA (521 aa).

Helical transmembrane passes span 68 to 88 (FVFIIYWSVLECKTSIYLLNI), 294 to 314 (ALASLQYLGCLILIPWGISFP), 399 to 419 (ILHLLTDIIYFAIPSASFISG), 446 to 466 (ILLLTDSCIGFHSPHGWEILI), and 481 to 501 (IISCFVSTFPVISDTVFKYWI).

It belongs to the CemA family.

It localises to the plastid. The protein localises to the chloroplast inner membrane. The enzyme catalyses K(+)(in) + H(+)(out) = K(+)(out) + H(+)(in). Its function is as follows. Contributes to K(+)/H(+) antiport activity by supporting proton efflux to control proton extrusion and homeostasis in chloroplasts in a light-dependent manner to modulate photosynthesis. Prevents excessive induction of non-photochemical quenching (NPQ) under continuous-light conditions. Indirectly promotes efficient inorganic carbon uptake into chloroplasts. The protein is Potassium/proton antiporter CemA of Huperzia lucidula (Shining clubmoss).